Reading from the N-terminus, the 134-residue chain is MMDKAIFNGLGRRKTSVARVYIVSGNGKLTINDKIFASAEEYFKDRVRARHAFEPLVVTNNDGKLDVFVRVEGGGLSGQAGAVRLALARALIKMDTSFKPVLKSHGMLSRDPRMVERKKYGLRKARRAPQYSKR.

This sequence belongs to the universal ribosomal protein uS9 family.

The polypeptide is Small ribosomal subunit protein uS9 (Pseudothermotoga lettingae (strain ATCC BAA-301 / DSM 14385 / NBRC 107922 / TMO) (Thermotoga lettingae)).